The chain runs to 143 residues: Small ribosomal subunit protein uS9 (143 aa).

Residue Ser2 is modified to N-acetylserine. A disordered region spans residues 123–143; the sequence is MPEPKKFGGKGARSRYQKSYR. Positions 134–143 are enriched in basic residues; that stretch reads ARSRYQKSYR.

The protein belongs to the universal ribosomal protein uS9 family.

The sequence is that of Small ribosomal subunit protein uS9 (RPS16) from Maudiozyma exigua (Yeast).